Consider the following 348-residue polypeptide: Phosphate acyltransferase (348 aa).

This sequence belongs to the PlsX family. As to quaternary structure, homodimer. Probably interacts with PlsY.

The protein localises to the cytoplasm. The catalysed reaction is a fatty acyl-[ACP] + phosphate = an acyl phosphate + holo-[ACP]. Its pathway is lipid metabolism; phospholipid metabolism. Its function is as follows. Catalyzes the reversible formation of acyl-phosphate (acyl-PO(4)) from acyl-[acyl-carrier-protein] (acyl-ACP). This enzyme utilizes acyl-ACP as fatty acyl donor, but not acyl-CoA. In Pectobacterium atrosepticum (strain SCRI 1043 / ATCC BAA-672) (Erwinia carotovora subsp. atroseptica), this protein is Phosphate acyltransferase.